A 118-amino-acid chain; its full sequence is Non-specific lipid-transfer protein 2 (118 aa).

Residues 1–25 (MARGMKLACVVLVICMVVIAPMAEG) form the signal peptide. Disulfide bonds link C29/C76, C39/C53, C54/C99, and C74/C113.

This sequence belongs to the plant LTP family.

In terms of biological role, plant non-specific lipid-transfer proteins transfer phospholipids as well as galactolipids across membranes. May play a role in wax or cutin deposition in the cell walls of expanding epidermal cells and certain secretory tissues. Binds saturated fatty acids, jasmonic acid and, with highest efficiency, unsaturated fatty acids and lysolipids. The polypeptide is Non-specific lipid-transfer protein 2 (Lens culinaris (Lentil)).